We begin with the raw amino-acid sequence, 295 residues long: MDKAVLETQFPDMNLVRKGKVRDIYDTGEAFLMVTTDRLSAFDVVLPNGIPGKGKVLTKISEFWFKQMAPLVGNHLISTDVADFPDVCQPYAKVLSGRTMLVKKAEPLPVECIVRGYISGSGWKSYQNNGTLCGITLPKGLVESDRLPEPLYTPSTKAEVGDHDINIDFAKTVDLIGRERAEKLRDLSIQIYLKGAQTALKKGIIIADTKFEFGLVDDEVILIDEVMTPDSSRFWPMDTYAPGGAQKSYDKQFVRDWLVSSGWDMKAPGPEIPQDVIAGTVAKYQEVLELITGQK.

The protein belongs to the SAICAR synthetase family.

It catalyses the reaction 5-amino-1-(5-phospho-D-ribosyl)imidazole-4-carboxylate + L-aspartate + ATP = (2S)-2-[5-amino-1-(5-phospho-beta-D-ribosyl)imidazole-4-carboxamido]succinate + ADP + phosphate + 2 H(+). The protein operates within purine metabolism; IMP biosynthesis via de novo pathway; 5-amino-1-(5-phospho-D-ribosyl)imidazole-4-carboxamide from 5-amino-1-(5-phospho-D-ribosyl)imidazole-4-carboxylate: step 1/2. The chain is Phosphoribosylaminoimidazole-succinocarboxamide synthase from Desulforapulum autotrophicum (strain ATCC 43914 / DSM 3382 / VKM B-1955 / HRM2) (Desulfobacterium autotrophicum).